A 104-amino-acid polypeptide reads, in one-letter code: uncharacterized protein (104 aa).

It to M.jannaschii MJ1511.

This is an uncharacterized protein from Methanocaldococcus jannaschii (strain ATCC 43067 / DSM 2661 / JAL-1 / JCM 10045 / NBRC 100440) (Methanococcus jannaschii).